We begin with the raw amino-acid sequence, 458 residues long: tRNA(Ile)-lysidine synthase (458 aa).

35 to 40 contacts ATP; that stretch reads SGGVDS.

It belongs to the tRNA(Ile)-lysidine synthase family.

The protein localises to the cytoplasm. The catalysed reaction is cytidine(34) in tRNA(Ile2) + L-lysine + ATP = lysidine(34) in tRNA(Ile2) + AMP + diphosphate + H(+). In terms of biological role, ligates lysine onto the cytidine present at position 34 of the AUA codon-specific tRNA(Ile) that contains the anticodon CAU, in an ATP-dependent manner. Cytidine is converted to lysidine, thus changing the amino acid specificity of the tRNA from methionine to isoleucine. The polypeptide is tRNA(Ile)-lysidine synthase (Nitrosomonas europaea (strain ATCC 19718 / CIP 103999 / KCTC 2705 / NBRC 14298)).